Reading from the N-terminus, the 240-residue chain is UDP-2,3-diacylglucosamine hydrolase (240 aa).

Asp-9, His-11, Asp-43, Asn-81, and His-116 together coordinate Mn(2+). 81-82 (NR) contributes to the substrate binding site. The substrate site is built by Asp-124, Ser-162, Lys-166, Lys-169, and His-197. 2 residues coordinate Mn(2+): His-197 and His-199.

It belongs to the LpxH family. It depends on Mn(2+) as a cofactor.

The protein localises to the cell inner membrane. The catalysed reaction is UDP-2-N,3-O-bis[(3R)-3-hydroxytetradecanoyl]-alpha-D-glucosamine + H2O = 2-N,3-O-bis[(3R)-3-hydroxytetradecanoyl]-alpha-D-glucosaminyl 1-phosphate + UMP + 2 H(+). Its pathway is glycolipid biosynthesis; lipid IV(A) biosynthesis; lipid IV(A) from (3R)-3-hydroxytetradecanoyl-[acyl-carrier-protein] and UDP-N-acetyl-alpha-D-glucosamine: step 4/6. Functionally, hydrolyzes the pyrophosphate bond of UDP-2,3-diacylglucosamine to yield 2,3-diacylglucosamine 1-phosphate (lipid X) and UMP by catalyzing the attack of water at the alpha-P atom. Involved in the biosynthesis of lipid A, a phosphorylated glycolipid that anchors the lipopolysaccharide to the outer membrane of the cell. The chain is UDP-2,3-diacylglucosamine hydrolase from Neisseria meningitidis serogroup B (strain ATCC BAA-335 / MC58).